The chain runs to 2472 residues: Nuclear receptor corepressor 2 (2472 aa).

Disordered stretches follow at residues 1 to 20, 47 to 168, and 190 to 220; these read MSGSTQPVAQTWRAAEPRYP, RDYT…SRLS, and ISKLKKKQQQLEEEAAKPPEPEKPVSPPPIE. Asymmetric dimethylarginine is present on R18. Residues 51 to 60 are compositionally biased toward polar residues; the sequence is SHLSPGSIIQ. Phosphoserine occurs at positions 54 and 67. 2 stretches are compositionally biased toward basic and acidic residues: residues 78–88 and 96–112; these read RSQELHLRPES and GKPDIEFTESKRPRLEL. Phosphoserine is present on residues S149 and S152. The stretch at 165 to 207 forms a coiled coil; that stretch reads SRLSKEELIQNMDRVDREITMVEQQISKLKKKQQQLEEEAAKP. The segment covering 203 to 212 has biased composition (basic and acidic residues); sequence EAAKPPEPEK. Residue S215 is modified to Phosphoserine. The segment at 254-312 is interaction with SIN3A/B; that stretch reads LPLYNQPSDTRQYHENIKINQAMRKKLILYFKRRNHARKQWEQRFCQRYDQLMEAWEKK. Residues 389–480 are deacetylase activation domain (DAD); the sequence is MRQLAVIPPM…YLTKKNENYK (92 aa). The region spanning 427 to 478 is the SANT 1 domain; the sequence is QVTNMWSEQERDTFREKFMQHPKNFGLIASFLERKTVAECVLYYYLTKKNEN. K449, Y470, and Y471 together coordinate 1D-myo-inositol 1,4,5,6-tetrakisphosphate. Disordered stretches follow at residues 487–618, 665–1107, and 1173–1197; these read YRRR…EMET, HKLK…RPPI, and SATSGSITKGLPSTRAADGPSYRGS. Residues 492 to 560 adopt a coiled-coil conformation; that stretch reads KSQQQQQQQQ…GEDNDEKEAV (69 aa). S493 is subject to Phosphoserine. Over residues 494–507 the composition is skewed to low complexity; sequence QQQQQQQQQQQQQQ. The segment covering 512–548 has biased composition (basic and acidic residues); that stretch reads SQEEKEEKEKEKEADKEEEKQDAENEKEELSKEKTDD. Phosphothreonine is present on T549. S550 is subject to Phosphoserine. Over residues 592–609 the composition is skewed to polar residues; it reads ATPQQSSELASMEMNESS. An SANT 2 domain is found at 606–657; it reads NESSRWTEEEMETAKKGLLEHGRNWSAIARMVGSKTVSQCKNFYFNYKKRQN. Residues 658 to 682 adopt a coiled-coil conformation; that stretch reads LDEILQQHKLKMEKERNARRKKKKT. Residues 709-718 are compositionally biased toward acidic residues; sequence NEEELAEEAE. Residues 739-750 show a composition bias toward polar residues; it reads VNNSSDTESVPS. S747 and S750 each carry phosphoserine. Pro residues-rich tracts occupy residues 773-782 and 789-811; these read TQPPVPPPEE and EPSPVPDASGPPSPEPSPSPAAP. Composition is skewed to basic and acidic residues over residues 831–850 and 859–868; these read EDAKEQKSEAEEIDVGKPEE and ESVKSDHKEE. N6-acetyllysine is present on K878. The span at 905–919 shows a compositional bias: low complexity; the sequence is GSSSGATQDSDSSAT. S938 carries the phosphoserine modification. T945 carries the post-translational modification Phosphothreonine. At S955 the chain carries Phosphoserine. The residue at position 958 (K958) is an N6-acetyllysine. Residues 978-988 show a composition bias toward basic and acidic residues; it reads KVHEPPREDTV. Positions 989-1000 are enriched in pro residues; sequence PPKPVPPVPPPT. A compositionally biased stretch (low complexity) spans 1090 to 1101; that stretch reads LPLGLHDSARPV. N6-acetyllysine is present on residues K1181 and K1209. Phosphoserine is present on S1220. Disordered regions lie at residues 1254–1277, 1345–1378, and 1410–1443; these read SVSQCSKEDGRSSSGPPHETAAPK, LKREGTPPPPPPPRDLTETYKPRPLDPLGPLKLK, and PLAPRPLKEGSITQGTPLKYDSGAPSTGTKKHDV. The residue at position 1350 (T1350) is a Phosphothreonine. Positions 1359 to 1368 are enriched in basic and acidic residues; that stretch reads DLTETYKPRP. A phosphoserine mark is found at S1449, S1509, and S1565. A disordered region spans residues 1479 to 1578; it reads KSRSGTSSGA…TVPEHHPHPI (100 aa). At R1624 the chain carries Asymmetric dimethylarginine. Residues 1734-1826 form a disordered region; the sequence is TAPPPFSSRH…PISPRTQDAL (93 aa). The segment covering 1740 to 1753 has biased composition (low complexity); the sequence is SSRHSSSPLSPGGP. A phosphoserine mark is found at S1746 and S1749. Residues 1765-1778 show a composition bias toward basic and acidic residues; the sequence is SERERERERERDKS. The segment covering 1807-1826 has biased composition (polar residues); the sequence is RPASHTHQHSPISPRTQDAL. S1819 carries the phosphoserine modification. Omega-N-methylarginine is present on R1854. Disordered stretches follow at residues 1857-1878, 1898-1986, and 2001-2078; these read RSTSTSSPVRPAATFPPATHCP, KETS…KPFS, and AGYS…LQTA. The span at 1899-1913 shows a compositional bias: basic and acidic residues; that stretch reads ETSRVARPERPRVDA. K1920 carries the N6-acetyllysine modification. The span at 1925-1938 shows a compositional bias: low complexity; the sequence is EPASSPSKSSEPRS. S1963 carries the post-translational modification Phosphoserine. K1983 is modified (N6-acetyllysine). S2004, S2012, S2015, S2016, and S2018 each carry phosphoserine. Phosphothreonine is present on T2020. Positions 2020–2043 are enriched in basic and acidic residues; the sequence is THDKGLSKPLEELEKSHLEGELRH. S2035 bears the Phosphoserine mark. Residues 2064 to 2075 show a composition bias toward low complexity; the sequence is LPESQPSSSPLL. A required for interaction with RARA in the absence of its ligand region spans residues 2086–2090; the sequence is RVVTL. The CORNR box of ID1 signature appears at 2094 to 2098; the sequence is ISEVI. A disordered region spans residues 2132–2226; the sequence is RRPPSDLYLP…GNTSQPPAFF (95 aa). 3 positions are modified to phosphoserine: S2161, S2181, and S2215. Positions 2296–2300 match the CORNR box of ID2 motif; sequence LEAII. The interval 2343–2459 is disordered; sequence GRSDHALTSP…HHAWDEEPKP (117 aa). A Phosphoserine modification is found at S2371. Residues 2439-2450 are compositionally biased toward low complexity; sequence LAAGSGPLAGPH.

Belongs to the N-CoR nuclear receptor corepressors family. In terms of assembly, forms a large corepressor complex that contains SIN3A/B and histone deacetylases HDAC1 and HDAC2. This complex associates with the thyroid (TR) and the retinoid acid receptors (RAR) in the absence of ligand, and may stabilize their interaction with TFIIB. Interacts directly with RARA in the absence of ligand; the interaction represses RARA activity. Interacts (isoform SMRT) with HDAC10. Interacts with MINT. Component of the N-Cor repressor complex, at least composed of NCOR1, NCOR2, HDAC3, TBL1X, TBL1R, CORO2A and GPS2. Interacts with CBFA2T3 and ATXN1L. Interacts with RARB; the interaction is weak and does not repress RARB transactivational activity. Interacts (via 1D-myo-inositol 1,4,5,6-tetrakisphosphate) with HDAC3; promoting the histone deacetylase activity of HDAC3. Interacts with HDAC7 and C1D. Interacts with NR4A2; this interaction increases in the absence of PITX3. Interacts with BCL6 (via the BTB domain), required for BCL6 transcriptional repressor activity on a subset of target genes. Forms ternary complexes with BCOR and BCL6 on target gene promoters but, on enhancer elements, interacts with BCL6 and HDAC3 to repress proximal gene expression. May interact with DEAF1. Interacts with RXRA. Interacts with MECP2. Interacts with ZBTB7A. Interacts with AR. Interacts with TBL1Y. Interacts with SANBR (via the BTB domain). In terms of tissue distribution, ubiquitous. Also widely expressed in early embryos.

Its subcellular location is the nucleus. Its function is as follows. Transcriptional corepressor that mediates the transcriptional repression activity of some nuclear receptors by promoting chromatin condensation, thus preventing access of the basal transcription. Acts by recruiting chromatin modifiers, such as histone deacetylases HDAC1, HDAC2 and HDAC3. Required to activate the histone deacetylase activity of HDAC3. Involved in the regulation BCL6-dependent of the germinal center (GC) reactions, mainly through the control of the GC B-cells proliferation and survival. Recruited by ZBTB7A to the androgen response elements/ARE on target genes, negatively regulates androgen receptor signaling and androgen-induced cell proliferation. The protein is Nuclear receptor corepressor 2 (Ncor2) of Mus musculus (Mouse).